Reading from the N-terminus, the 374-residue chain is Glutamate 5-kinase (374 aa).

K16 provides a ligand contact to ATP. Residues S56, D143, and N155 each coordinate substrate. Residues 175–176 (TD) and 217–223 (SGGMLTK) each bind ATP. Residues 282–360 (RGALILDDGA…SNIGAILGYK (79 aa)) enclose the PUA domain.

It belongs to the glutamate 5-kinase family.

Its subcellular location is the cytoplasm. It carries out the reaction L-glutamate + ATP = L-glutamyl 5-phosphate + ADP. Its pathway is amino-acid biosynthesis; L-proline biosynthesis; L-glutamate 5-semialdehyde from L-glutamate: step 1/2. Its function is as follows. Catalyzes the transfer of a phosphate group to glutamate to form L-glutamate 5-phosphate. This is Glutamate 5-kinase from Marinomonas sp. (strain MWYL1).